We begin with the raw amino-acid sequence, 254 residues long: Pimeloyl-[acyl-carrier protein] methyl ester esterase (254 aa).

In terms of domain architecture, AB hydrolase-1 spans 16–241; it reads LVLLHGWGMN…QSSHAPFMTE (226 aa). Residues tryptophan 22, 82 to 83, and 143 to 147 contribute to the substrate site; these read SL and FMALQ. The active-site Nucleophile is the serine 82. Catalysis depends on residues aspartate 207 and histidine 235. Residue histidine 235 coordinates substrate.

Belongs to the AB hydrolase superfamily. Carboxylesterase BioH family. Monomer.

Its subcellular location is the cytoplasm. It carries out the reaction 6-carboxyhexanoyl-[ACP] methyl ester + H2O = 6-carboxyhexanoyl-[ACP] + methanol + H(+). Its pathway is cofactor biosynthesis; biotin biosynthesis. In terms of biological role, the physiological role of BioH is to remove the methyl group introduced by BioC when the pimeloyl moiety is complete. It allows to synthesize pimeloyl-ACP via the fatty acid synthetic pathway through the hydrolysis of the ester bonds of pimeloyl-ACP esters. This Vibrio campbellii (strain ATCC BAA-1116) protein is Pimeloyl-[acyl-carrier protein] methyl ester esterase.